The chain runs to 321 residues: uncharacterized protein (321 aa).

A compositionally biased stretch (basic residues) spans Met1–Lys12. Disordered regions lie at residues Met1–Thr59 and Glu71–Asp289. The span at Asp50–Thr59 shows a compositional bias: basic and acidic residues. A compositionally biased stretch (acidic residues) spans Asp99–Glu115. Over residues Ser156 to Asp175 the composition is skewed to low complexity. A compositionally biased stretch (basic and acidic residues) spans Asp179–Ile189. Positions Glu231–Ala242 are enriched in low complexity.

This is an uncharacterized protein from Equus caballus (Horse).